The sequence spans 317 residues: Inositol oxygenase 2 (317 aa).

Residues R57 and 115 to 117 contribute to the substrate site; that span reads DES. Fe cation contacts are provided by H128, H153, and D154. Residues K157 and 174–175 each bind substrate; that span reads GD. Fe cation is bound by residues H226, H252, and D285. A substrate-binding site is contributed by 252–253; the sequence is HS.

Belongs to the myo-inositol oxygenase family. Fe cation is required as a cofactor. As to expression, expressed mainly in roots, stems, flowers and siliques. Low expression in leaves.

The protein resides in the cytoplasm. It catalyses the reaction myo-inositol + O2 = D-glucuronate + H2O + H(+). It participates in polyol metabolism; myo-inositol degradation into D-glucuronate; D-glucuronate from myo-inositol: step 1/1. Functionally, involved in the biosynthesis of UDP-glucuronic acid (UDP-GlcA), providing nucleotide sugars for cell-wall polymers. May be also involved in plant ascorbate biosynthesis. This chain is Inositol oxygenase 2 (MIOX2), found in Arabidopsis thaliana (Mouse-ear cress).